The chain runs to 261 residues: Follistatin-related protein 3 (261 aa).

An N-terminal signal peptide occupies residues 1–26; that stretch reads MRPRAPGPLWPLPWGALAWAVGFVGS. Residues 36–107 form the TB domain; sequence GVCWLQQGRE…SCEGVECGPG (72 aa). 8 disulfide bridges follow: Cys38–Cys61, Cys48–Cys92, Cys62–Cys95, Cys99–Cys110, Cys104–Cys119, Cys121–Cys153, Cys125–Cys146, and Cys135–Cys167. Asn73 is a glycosylation site (N-linked (GlcNAc...) asparagine). The Follistatin-like 1 domain occupies 99-119; it reads CEGVECGPGKACRMLGGRPRC. 2 consecutive Kazal-like domains span residues 113–169 and 189–245; these read LGGR…RCRK and SAHC…SCAG. Residues 170-193 enclose the Follistatin-like 2 domain; the sequence is SCAHVVCLRPQSCVVDQTGSAHCV. Disulfide bonds link Cys195-Cys229, Cys200-Cys222, and Cys211-Cys243. Asn215 carries N-linked (GlcNAc...) asparagine glycosylation. A disordered region spans residues 242–261; sequence SCAGTPEPLDPESEEEENFV. Acidic residues predominate over residues 250–261; the sequence is LDPESEEEENFV.

In terms of assembly, interacts with INHBA and INHBB. Interacts with FN1. Interacts with ADAM12. Interacts with MLLT10; the interaction enhances MLLT10 in vitro transcriptional activity and self-association. Interacts with MSTN.

The protein resides in the secreted. The protein localises to the nucleus. In terms of biological role, the secreted form is a binding and antagonizing protein for members of the TGF-beta family, such as activin, BMP2 and MSTN. Inhibits activin A-, activin B-, BMP2- and MSDT-induced cellular signaling; more effective on activin A than on activin B. Involved in bone formation; inhibits osteoclast differentiation. Involved in hematopoiesis; involved in differentiation of hemopoietic progenitor cells, increases hematopoietic cell adhesion to fibronectin and seems to contribute to the adhesion of hematopoietic precursor cells to the bone marrow stroma. The nuclear form is probably involved in transcriptional regulation via interaction with MLLT10. The protein is Follistatin-related protein 3 (FSTL3) of Bos taurus (Bovine).